Consider the following 165-residue polypeptide: UPF0114 protein in repA1-repA2 intergenic region (165 aa).

3 helical membrane passes run 15–35, 53–73, and 136–156; these read LMFP…VKFF, LVLI…LVMV, and IMWC…MAYI.

Belongs to the UPF0114 family.

The protein localises to the cell membrane. This Buchnera aphidicola subsp. Thelaxes suberi protein is UPF0114 protein in repA1-repA2 intergenic region.